Here is a 365-residue protein sequence, read N- to C-terminus: Tubulin-like protein CetZ (365 aa).

GTP-binding positions include 10–14 (QCGTK), 103–105 (GTG), Glu-136, Asn-163, and Asn-181.

The protein belongs to the CetZ family.

The protein resides in the cytoplasm. Its function is as follows. Involved in cell shape control. The chain is Tubulin-like protein CetZ from Pyrococcus horikoshii (strain ATCC 700860 / DSM 12428 / JCM 9974 / NBRC 100139 / OT-3).